The following is a 469-amino-acid chain: MAEEQDLSEVELSPVGSEEPRCLSPGSAPSLGPDGGGGGGGGSGLRASPGPGELGKVKKEQQDGEADDDKFPVCIREAVSQVLSGYDWTLVPMPVRVNGASKSKPHVKRPMNAFMVWAQAARRKLADQYPHLHNAELSKTLGKLWRLLNESDKRPFIEEAERLRMQHKKDHPDYKYQPRRRKNGKAAQGESECPGGEAEQGGAAAIQAHYKSAHLDHRHPGEGSPMSDGNPEHPSGQSHGPPTPPTTPKTELQSGKADPKRDGRSMGEGGKPHIDFGNVDIGEISHEVMSNMETFDVAELDQYLPPNGHPGHVGSYSAAGYGLGSALAVASGHSAWISKPPGVALPTVSPPGVDAKAQVKTETAGPQGPSHYSDQPSTSQIAYTSLSLPHYGSAFPSISRPQFDYSDHQPSGPYYGHSGQTSGLYSAFSYMGPSQRPLYTAISDPSPSGPQSHSPTHWEQPVYTTLSRP.

5 disordered regions span residues 1–70 (MAEE…DDDK), 163–203 (LRMQ…QGGA), 215–278 (LDHR…DFGN), 357–378 (AQVK…QPST), and 436–469 (RPLY…LSRP). The segment covering 23–32 (LSPGSAPSLG) has biased composition (low complexity). Ser-24 is subject to Phosphoserine. A compositionally biased stretch (gly residues) spans 33–44 (PDGGGGGGGGSG). The interval 65 to 105 (EADDDKFPVCIREAVSQVLSGYDWTLVPMPVRVNGASKSKP) is dimerization (DIM). The segment at residues 107–175 (VKRPMNAFMV…QHKKDHPDYK (69 aa)) is a DNA-binding region (HMG box). Composition is skewed to basic and acidic residues over residues 163–176 (LRMQ…DYKY) and 257–274 (ADPK…KPHI). Residues 231 to 313 (PEHPSGQSHG…LPPNGHPGHV (83 aa)) are transactivation domain (TAM). Residues 356 to 469 (KAQVKTETAG…QPVYTTLSRP (114 aa)) are transactivation domain (TAC). Residues 443–469 (SDPSPSGPQSHSPTHWEQPVYTTLSRP) are compositionally biased toward polar residues.

Monomer. Interacts with ARMCX3 at the mitochondrial outer membrane surface. Interacts with PAX3.

The protein resides in the cytoplasm. The protein localises to the nucleus. It is found in the mitochondrion outer membrane. Transcription factor that plays a central role in developing and mature glia. Specifically activates expression of myelin genes, during oligodendrocyte (OL) maturation, such as DUSP15 and MYRF, thereby playing a central role in oligodendrocyte maturation and CNS myelination. Once induced, MYRF cooperates with SOX10 to implement the myelination program. Transcriptional activator of MITF, acting synergistically with PAX3. Transcriptional activator of MBP, via binding to the gene promoter. The sequence is that of Transcription factor SOX-10 (SOX10) from Sus scrofa (Pig).